Here is a 128-residue protein sequence, read N- to C-terminus: Small ribosomal subunit protein uS9 (128 aa).

It belongs to the universal ribosomal protein uS9 family.

The chain is Small ribosomal subunit protein uS9 from Cytophaga hutchinsonii (strain ATCC 33406 / DSM 1761 / CIP 103989 / NBRC 15051 / NCIMB 9469 / D465).